The primary structure comprises 155 residues: Large ribosomal subunit protein uL13 (155 aa).

The protein belongs to the universal ribosomal protein uL13 family. As to quaternary structure, part of the 50S ribosomal subunit.

Functionally, this protein is one of the early assembly proteins of the 50S ribosomal subunit, although it is not seen to bind rRNA by itself. It is important during the early stages of 50S assembly. The protein is Large ribosomal subunit protein uL13 of Rickettsia felis (strain ATCC VR-1525 / URRWXCal2) (Rickettsia azadi).